We begin with the raw amino-acid sequence, 248 residues long: Triosephosphate isomerase (248 aa).

Positions 10 and 12 each coordinate substrate. H95 (electrophile) is an active-site residue. E165 (proton acceptor) is an active-site residue.

This sequence belongs to the triosephosphate isomerase family. Homodimer.

It catalyses the reaction D-glyceraldehyde 3-phosphate = dihydroxyacetone phosphate. The protein operates within carbohydrate biosynthesis; gluconeogenesis. It functions in the pathway carbohydrate degradation; glycolysis; D-glyceraldehyde 3-phosphate from glycerone phosphate: step 1/1. This is Triosephosphate isomerase (TPI1) from Zygosaccharomyces bailii.